We begin with the raw amino-acid sequence, 322 residues long: Hydrolase C26A3.11 (322 aa).

The 247-residue stretch at 44-290 folds into the CN hydrolase domain; that stretch reads FRIGLVQLAN…PSIVYADIDP (247 aa). Glu83 functions as the Proton acceptor in the catalytic mechanism. Lys154 (proton donor) is an active-site residue. Cys195 acts as the Nucleophile in catalysis.

This sequence belongs to the carbon-nitrogen hydrolase superfamily. NIT1/NIT2 family.

This is Hydrolase C26A3.11 from Schizosaccharomyces pombe (strain 972 / ATCC 24843) (Fission yeast).